We begin with the raw amino-acid sequence, 337 residues long: Casein kinase I isoform alpha (337 aa).

The 269-residue stretch at tyrosine 17–phenylalanine 285 folds into the Protein kinase domain. ATP is bound by residues isoleucine 23–isoleucine 31 and lysine 46. Aspartate 136 functions as the Proton acceptor in the catalytic mechanism. A compositionally biased stretch (low complexity) spans alanine 309–lysine 325. The tract at residues alanine 309–phenylalanine 337 is disordered.

It belongs to the protein kinase superfamily. CK1 Ser/Thr protein kinase family. Casein kinase I subfamily. Post-translationally, autophosphorylated.

Its subcellular location is the cytoplasm. The protein localises to the cytoskeleton. It is found in the microtubule organizing center. The protein resides in the centrosome. It localises to the chromosome. Its subcellular location is the centromere. The protein localises to the kinetochore. It is found in the nucleus speckle. The protein resides in the cilium basal body. It localises to the spindle. It carries out the reaction L-seryl-[protein] + ATP = O-phospho-L-seryl-[protein] + ADP + H(+). It catalyses the reaction L-threonyl-[protein] + ATP = O-phospho-L-threonyl-[protein] + ADP + H(+). Functionally, casein kinases are operationally defined by their preferential utilization of acidic proteins such as caseins as substrates. It can phosphorylate a large number of proteins. Participates in Wnt signaling. May play a role in segregating chromosomes during mitosis. May play a role in keratin cytoskeleton disassembly. This chain is Casein kinase I isoform alpha (CSNK1A1), found in Gallus gallus (Chicken).